Here is a 123-residue protein sequence, read N- to C-terminus: Large ribosomal subunit protein bL12 (123 aa).

It belongs to the bacterial ribosomal protein bL12 family. In terms of assembly, homodimer. Part of the ribosomal stalk of the 50S ribosomal subunit. Forms a multimeric L10(L12)X complex, where L10 forms an elongated spine to which 2 to 4 L12 dimers bind in a sequential fashion. Binds GTP-bound translation factors.

Its function is as follows. Forms part of the ribosomal stalk which helps the ribosome interact with GTP-bound translation factors. Is thus essential for accurate translation. The protein is Large ribosomal subunit protein bL12 of Salmonella arizonae (strain ATCC BAA-731 / CDC346-86 / RSK2980).